Here is a 189-residue protein sequence, read N- to C-terminus: dTTP/UTP pyrophosphatase (189 aa).

The active-site Proton acceptor is the aspartate 73.

Belongs to the Maf family. YhdE subfamily. A divalent metal cation is required as a cofactor.

The protein localises to the cytoplasm. It carries out the reaction dTTP + H2O = dTMP + diphosphate + H(+). It catalyses the reaction UTP + H2O = UMP + diphosphate + H(+). Functionally, nucleoside triphosphate pyrophosphatase that hydrolyzes dTTP and UTP. May have a dual role in cell division arrest and in preventing the incorporation of modified nucleotides into cellular nucleic acids. The polypeptide is dTTP/UTP pyrophosphatase (Vibrio parahaemolyticus serotype O3:K6 (strain RIMD 2210633)).